Reading from the N-terminus, the 636-residue chain is Methyl-CpG-binding domain protein 1 (636 aa).

In terms of domain architecture, MBD spans 1–69 (MAESWQDCPA…TLFDFRQGTL (69 aa)). The segment at 75–113 (KTHPLAVPSKKKKKPSKPAKTKKQQVGLQRSEVRIETPQ) is disordered. The segment covering 83–97 (SKKKKKPSKPAKTKK) has biased composition (basic residues). Positions 84–88 (KKKKK) match the Nuclear localization signal motif. Lys-117 is covalently cross-linked (Glycyl lysine isopeptide (Lys-Gly) (interchain with G-Cter in SUMO2)). 2 consecutive CXXC-type zinc fingers follow at residues 187–234 (RMFK…RRCL) and 235–281 (RIME…RRCF). Residues Cys-194, Cys-197, Cys-200, Cys-206, Cys-209, Cys-212, Cys-228, Cys-233, Cys-243, Cys-246, Cys-249, Cys-255, Cys-258, Cys-261, Cys-275, and Cys-280 each contribute to the Zn(2+) site. Residues 291–314 (GSKVASQRHSQAPPLPPHPASQYT) form a disordered region. A Glycyl lysine isopeptide (Lys-Gly) (interchain with G-Cter in SUMO2) cross-link involves residue Lys-293. The CXXC-type 3 zinc-finger motif lies at 348–396 (TNQRQNRKCGACAACLRRMDCGRCDFCCDKPKFGGGNQKRQKCRWRQCL). Cys-356, Cys-359, Cys-362, Cys-368, Cys-371, Cys-374, Cys-390, and Cys-395 together coordinate Zn(2+). A disordered region spans residues 407–474 (AGSGSGEGAG…GRGSVLPQPD (68 aa)). The residue at position 409 (Ser-409) is a Phosphoserine. Residues Lys-443 and Lys-461 each participate in a glycyl lysine isopeptide (Lys-Gly) (interchain with G-Cter in SUMO2) cross-link. Glycyl lysine isopeptide (Lys-Gly) (interchain with G-Cter in SUMO2); alternate cross-links involve residues Lys-520 and Lys-559. A disordered region spans residues 543–589 (QSGFPSKAADPDLSPVKQEPPGPEEDGEEKKDDVSETTPAEEIGGVG). The transcriptional repression domain (TRD) stretch occupies residues 550 to 612 (AADPDLSPVK…RLRDAEAWLP (63 aa)).

Interacts with OASL, ATF7IP, ATF7IP2 and BAHD1. Binds CHAF1A and the SUV39H1-CBX5 complex via the MBD domain. Binds MGP via the TRD domain. May be part of the MeCP1 complex. During DNA replication, it recruits SETDB1 to form a S phase-specific complex that facilitates methylation of H3 'Lys-9' during replication-coupled chromatin assembly and is at least composed of the CAF-1 subunit CHAF1A, MBD1 and SETDB1. In terms of assembly, interacts with the Ten-1 ICD form of TENM1. In terms of processing, sumoylated, sumoylation may increase interaction with ATF7IP. In terms of tissue distribution, highly expressed in kidney, liver and brain. Detected at lower levels in heart, lung, skeletal muscle, spleen and testis.

It is found in the nucleus. The protein resides in the nucleus matrix. It localises to the nucleus speckle. Its subcellular location is the chromosome. Its function is as follows. Transcriptional repressor that binds CpG islands in promoters where the DNA is methylated at position 5 of cytosine within CpG dinucleotides. Binding is abolished by the presence of 7-mG that is produced by DNA damage by methylmethanesulfonate (MMS). Acts as transcriptional repressor and plays a role in gene silencing by recruiting ATF7IP, which in turn recruits factors such as the histone methyltransferase SETDB1. Probably forms a complex with SETDB1 and ATF7IP that represses transcription and couples DNA methylation and histone 'Lys-9' trimethylation. Isoform 1 can also repress transcription from unmethylated promoters. The polypeptide is Methyl-CpG-binding domain protein 1 (Mus musculus (Mouse)).